The following is a 416-amino-acid chain: Multifunctional CCA protein (416 aa).

ATP contacts are provided by Gly8 and Arg11. CTP-binding residues include Gly8 and Arg11. 2 residues coordinate Mg(2+): Asp21 and Asp23. 3 residues coordinate ATP: Arg91, Arg138, and Arg141. CTP contacts are provided by Arg91, Arg138, and Arg141. The region spanning 229–331 (TGLHQELVSD…YELLQRCDAF (103 aa)) is the HD domain.

Belongs to the tRNA nucleotidyltransferase/poly(A) polymerase family. Bacterial CCA-adding enzyme type 1 subfamily. In terms of assembly, monomer. Can also form homodimers and oligomers. Requires Mg(2+) as cofactor. The cofactor is Ni(2+).

It catalyses the reaction a tRNA precursor + 2 CTP + ATP = a tRNA with a 3' CCA end + 3 diphosphate. It carries out the reaction a tRNA with a 3' CCA end + 2 CTP + ATP = a tRNA with a 3' CCACCA end + 3 diphosphate. Catalyzes the addition and repair of the essential 3'-terminal CCA sequence in tRNAs without using a nucleic acid template. Adds these three nucleotides in the order of C, C, and A to the tRNA nucleotide-73, using CTP and ATP as substrates and producing inorganic pyrophosphate. tRNA 3'-terminal CCA addition is required both for tRNA processing and repair. Also involved in tRNA surveillance by mediating tandem CCA addition to generate a CCACCA at the 3' terminus of unstable tRNAs. While stable tRNAs receive only 3'-terminal CCA, unstable tRNAs are marked with CCACCA and rapidly degraded. In Xylella fastidiosa (strain 9a5c), this protein is Multifunctional CCA protein.